Reading from the N-terminus, the 410-residue chain is Glycylpeptide N-tetradecanoyltransferase (410 aa).

The tetradecanoyl-CoA site is built by F30, W31, F162, L163, C164, V165, S171, R173, L174, and A175.

The protein belongs to the NMT family. In terms of assembly, heterodimer composed of NMT and AK2; AK2 myristoylation stabilizes the complex.

It localises to the cytoplasm. The enzyme catalyses N-terminal glycyl-[protein] + tetradecanoyl-CoA = N-tetradecanoylglycyl-[protein] + CoA + H(+). Adds a myristoyl group to the N-terminal glycine residue of certain cellular proteins. Myristoylates adenylate kinase AK2. During the asexual blood stage, may myristoylate proteins such as ARO, CDPK1 and GAP45. Probably by mediating protein myristoylation, plays a role in the assembly of the inner membrane complex during the early stages of schizogony and in the formation of rhoptries in the late stages and thus merozoite egress. The polypeptide is Glycylpeptide N-tetradecanoyltransferase (Plasmodium falciparum (isolate 3D7)).